Reading from the N-terminus, the 403-residue chain is MEDRSHKVLLALVMLFLFAVIVLQYVCPGTECQLLRLRALSPAAAADPYRAEDETPARFVPRFNFSAGDLLRRVDFNIKGDDLIVFLHIQKTGGTTFGRHLVRNIQLEQPCECRAGQKKCTCHRPGKRETWLFSRFSTGWSCGLHADWTELTNCVPSVVDSKKEVRLRPSRNFYYITILRDPVSRYLSEWRHVQRGATWKASLHVCDGRSPTTEELPSCYTGDDWSGCSLQEFMDCPYNLANNRQVRMLSDLSLVGCYNLSVMPEEQRNKVLLDSAKENLKRMAFFGLTEFQRKTQYLFEKTFNMNFISPFTQYNSTRASSVEIDEQTQQRIEALNFLDMELYDYAKDLFLQRYQYMRQKEHQEARRKRQEQRKILRAKQAHLREQGENSSSTDYLGNVERWR.

The Cytoplasmic portion of the chain corresponds to 1–7 (MEDRSHK). Residues 8–28 (VLLALVMLFLFAVIVLQYVCP) form a helical; Signal-anchor for type II membrane protein membrane-spanning segment. The Lumenal portion of the chain corresponds to 29-403 (GTECQLLRLR…DYLGNVERWR (375 aa)). N64 carries N-linked (GlcNAc...) asparagine glycosylation. 88–96 (HIQKTGGTT) lines the 3'-phosphoadenylyl sulfate pocket. Substrate contacts are provided by residues 118–119 (KK), R135, W140, and H145. H145 acts as the Proton acceptor in catalysis. The 3'-phosphoadenylyl sulfate site is built by R180 and S188. Residues H192 and W199 each coordinate substrate. An N-linked (GlcNAc...) asparagine glycan is attached at N259. Residue 312-314 (TQY) participates in 3'-phosphoadenylyl sulfate binding. The N-linked (GlcNAc...) asparagine glycan is linked to N315. Position 318–319 (318–319 (RA)) interacts with 3'-phosphoadenylyl sulfate. A disordered region spans residues 381–403 (AHLREQGENSSSTDYLGNVERWR). N-linked (GlcNAc...) asparagine glycosylation occurs at N389.

This sequence belongs to the sulfotransferase 6 family.

The protein localises to the membrane. The catalysed reaction is alpha-D-glucosaminyl-[heparan sulfate](n) + 3'-phosphoadenylyl sulfate = 6-sulfo-alpha-D-glucosaminyl-[heparan sulfate](n) + adenosine 3',5'-bisphosphate + H(+). 6-O-sulfation enzyme which catalyzes the transfer of sulfate from 3'-phosphoadenosine 5'-phosphosulfate (PAPS) to position 6 of the N-sulfoglucosamine residue (GlcNS) of heparan sulfate. May also play a role in limb development. The sequence is that of Heparan-sulfate 6-O-sulfotransferase 2 (HS6ST2) from Gallus gallus (Chicken).